The following is a 152-amino-acid chain: Ribosome maturation factor RimP (152 aa).

The protein belongs to the RimP family.

The protein resides in the cytoplasm. In terms of biological role, required for maturation of 30S ribosomal subunits. The chain is Ribosome maturation factor RimP from Paraburkholderia xenovorans (strain LB400).